The sequence spans 65 residues: Large ribosomal subunit protein bL35 (65 aa).

The protein belongs to the bacterial ribosomal protein bL35 family.

In Laribacter hongkongensis (strain HLHK9), this protein is Large ribosomal subunit protein bL35.